The chain runs to 457 residues: Dynein regulatory complex protein 10 (457 aa).

3 coiled-coil regions span residues 101–127 (EKAS…DQER), 209–258 (IQDI…LHQV), and 292–381 (QQDI…AESE). Residues 397–426 (MVRAATLIQAMWKGYLVRSMLRSRKKKRVK) enclose the IQ domain. A disordered region spans residues 419-457 (SRKKKRVKSKGKDKGKGKEKPKEEKGKEKKAKGKGKGKK). Residues 428 to 445 (KGKDKGKGKEKPKEEKGK) are compositionally biased toward basic and acidic residues. Basic residues predominate over residues 446–457 (EKKAKGKGKGKK).

Belongs to the DRC10 family. Component of the nexin-dynein regulatory complex (N-DRC). Interacts with CFAP52.

It localises to the cytoplasm. Its subcellular location is the cytoskeleton. It is found in the flagellum axoneme. Functionally, component of the nexin-dynein regulatory complex (N-DRC), a key regulator of ciliary/flagellar motility which maintains the alignment and integrity of the distal axoneme and regulates microtubule sliding in motile axonemes. This chain is Dynein regulatory complex protein 10 (Iqcd), found in Rattus norvegicus (Rat).